A 291-amino-acid chain; its full sequence is START domain-containing protein 10 (291 aa).

N-acetylmethionine is present on M1. A disordered region spans residues 1-20 (MEKLAASTEPQGPRPVLGRE). In terms of domain architecture, START spans 14 to 224 (RPVLGRESVQ…MYKACLKYPE (211 aa)). N6-succinyllysine is present on residues K94, K197, and K202. S253 and S259 each carry phosphoserine. The disordered stretch occupies residues 260–291 (LENIDESAVAESREERMGGAGGEGSDDDTSLT). Residue S284 is modified to Phosphoserine; by CK2. S289 carries the phosphoserine modification.

Phosphorylation at Ser-284 by CK2 negatively regulates lipid transfer activity, possibly by decreasing membrane association.

The protein resides in the cell projection. It localises to the cilium. Its subcellular location is the flagellum. The protein localises to the cytoplasm. It is found in the membrane. Its function is as follows. May play metabolic roles in sperm maturation or fertilization. Phospholipid transfer protein that preferentially selects lipid species containing a palmitoyl or stearoyl chain on the sn-1 and an unsaturated fatty acyl chain (18:1 or 18:2) on the sn-2 position. Able to transfer phosphatidylcholine (PC) and phosphatidyetanolamline (PE) between membranes. The sequence is that of START domain-containing protein 10 (STARD10) from Homo sapiens (Human).